Consider the following 601-residue polypeptide: Elongation factor 4 (601 aa).

One can recognise a tr-type G domain in the interval 6–188 (NRIRNFCIIA…QVVTKIAPPK (183 aa)). GTP-binding positions include 18–23 (DHGKST) and 135–138 (NKID).

This sequence belongs to the TRAFAC class translation factor GTPase superfamily. Classic translation factor GTPase family. LepA subfamily.

The protein localises to the cell membrane. The enzyme catalyses GTP + H2O = GDP + phosphate + H(+). Required for accurate and efficient protein synthesis under certain stress conditions. May act as a fidelity factor of the translation reaction, by catalyzing a one-codon backward translocation of tRNAs on improperly translocated ribosomes. Back-translocation proceeds from a post-translocation (POST) complex to a pre-translocation (PRE) complex, thus giving elongation factor G a second chance to translocate the tRNAs correctly. Binds to ribosomes in a GTP-dependent manner. In Desulforamulus reducens (strain ATCC BAA-1160 / DSM 100696 / MI-1) (Desulfotomaculum reducens), this protein is Elongation factor 4.